Reading from the N-terminus, the 338-residue chain is Isopenicillin N synthase (338 aa).

Isopenicillin N-binding residues include arginine 89, tyrosine 93, serine 185, and tyrosine 191. The N-[(5S)-5-amino-5-carboxypentanoyl]-L-cysteinyl-D-valine site is built by arginine 89, tyrosine 93, serine 185, tyrosine 191, histidine 216, and aspartate 218. One can recognise a Fe2OG dioxygenase domain in the interval 182 to 290 (TLSSVVLIRY…RQSLPFFVNL (109 aa)). Fe(2+) is bound by residues histidine 216, aspartate 218, and histidine 272. Position 281 (arginine 281) interacts with 2-oxoglutarate. Position 283 (serine 283) interacts with isopenicillin N. Serine 283 lines the N-[(5S)-5-amino-5-carboxypentanoyl]-L-cysteinyl-D-valine pocket.

The protein belongs to the iron/ascorbate-dependent oxidoreductase family. Monomer. Fe(2+) serves as cofactor.

The protein resides in the cytoplasm. It localises to the cytosol. It carries out the reaction N-[(5S)-5-amino-5-carboxypentanoyl]-L-cysteinyl-D-valine + O2 = isopenicillin N + 2 H2O. The protein operates within antibiotic biosynthesis; penicillin G biosynthesis; penicillin G from L-alpha-aminoadipate and L-cysteine and L-valine: step 2/3. Isopenicillin N synthase; part of the gene cluster that mediates the biosynthesis of penicillin, the world's most important antibiotic. IpnA catalyzes the cyclization of the tripeptide N-[(5S)-5-amino-5-carboxypentanoyl]-L-cysteinyl-D-valine (LLD-ACV or ACV) to form isopenicillin N (IPN) that contains the beta-lactam nucleus. The penicillin biosynthesis occurs via 3 enzymatic steps, the first corresponding to the production of the tripeptide N-[(5S)-5-amino-5-carboxypentanoyl]-L-cysteinyl-D-valine (LLD-ACV or ACV) by the NRPS pcbAB. The tripeptide ACV is then cyclized to isopenicillin N (IPN) by the isopenicillin N synthase pcbC that forms the beta-lactam nucleus. Finally, the alpha-aminoadipyl side chain is exchanged for phenylacetic acid by the isopenicillin N acyltransferase penDE to yield penicillin in the peroxisomal matrix. This Hapsidospora chrysogena (Acremonium chrysogenum) protein is Isopenicillin N synthase (PCBC).